A 225-amino-acid chain; its full sequence is MLLHIPDILSADQVADFRRRLDAADWTDGRETVGHLGAQAKHNQQLPEGSPLRRELGEIILVALARHPLFFSAALPLKYLPPRFNRYSGGGTYGFHVDGAVMNLANGEQLRSDISCTLFLSAPYEYEGGELIISDTYGEHEVKLPAGDLIVYPSSSLHQVRPVTAGARVASFFWVQSMVRDDVQRRLLWEMDGSIERLRQTGGDAEAVLQLTGVYHNLLRRWSEV.

One can recognise a Fe2OG dioxygenase domain in the interval lysine 78–serine 177. The Fe cation site is built by histidine 96, aspartate 98, and histidine 158. Arginine 168 serves as a coordination point for 2-oxoglutarate.

It depends on Fe(2+) as a cofactor. The cofactor is L-ascorbate.

In Stenotrophomonas maltophilia (strain K279a), this protein is PKHD-type hydroxylase Smlt1146.